The chain runs to 496 residues: L-arabinose isomerase (496 aa).

Residues glutamate 306, glutamate 331, histidine 348, and histidine 447 each contribute to the Mn(2+) site.

The protein belongs to the arabinose isomerase family. Requires Mn(2+) as cofactor.

The enzyme catalyses beta-L-arabinopyranose = L-ribulose. Its pathway is carbohydrate degradation; L-arabinose degradation via L-ribulose; D-xylulose 5-phosphate from L-arabinose (bacterial route): step 1/3. In terms of biological role, catalyzes the conversion of L-arabinose to L-ribulose. The sequence is that of L-arabinose isomerase from Geobacillus kaustophilus (strain HTA426).